Here is a 400-residue protein sequence, read N- to C-terminus: Argininosuccinate synthase (400 aa).

ATP contacts are provided by residues 10-18 and alanine 38; that span reads AYSGGVDTS. An L-citrulline-binding site is contributed by tyrosine 89. Glycine 119 serves as a coordination point for ATP. Threonine 121, asparagine 125, and aspartate 126 together coordinate L-aspartate. Asparagine 125 lines the L-citrulline pocket. L-citrulline contacts are provided by arginine 129, serine 177, serine 186, glutamate 262, and tyrosine 274.

It belongs to the argininosuccinate synthase family. Type 1 subfamily. Homotetramer.

It is found in the cytoplasm. It catalyses the reaction L-citrulline + L-aspartate + ATP = 2-(N(omega)-L-arginino)succinate + AMP + diphosphate + H(+). It functions in the pathway amino-acid biosynthesis; L-arginine biosynthesis; L-arginine from L-ornithine and carbamoyl phosphate: step 2/3. The sequence is that of Argininosuccinate synthase from Nostoc sp. (strain PCC 7120 / SAG 25.82 / UTEX 2576).